A 288-amino-acid chain; its full sequence is 4-hydroxybenzoate octaprenyltransferase (288 aa).

The next 8 membrane-spanning stretches (helical) occupy residues 23–43 (IGSL…GRGI), 46–66 (AKIL…GCVV), 98–118 (ILFV…NSMT), 141–161 (LPQV…FAAV), 163–183 (ESLP…TVAY), 213–233 (LIIG…GWLM), 234–254 (NLGG…THQQ), and 268–288 (AFLN…ISYW).

The protein belongs to the UbiA prenyltransferase family. The cofactor is Mg(2+).

The protein resides in the cell inner membrane. It carries out the reaction all-trans-octaprenyl diphosphate + 4-hydroxybenzoate = 4-hydroxy-3-(all-trans-octaprenyl)benzoate + diphosphate. It functions in the pathway cofactor biosynthesis; ubiquinone biosynthesis. In terms of biological role, catalyzes the prenylation of para-hydroxybenzoate (PHB) with an all-trans polyprenyl group. Mediates the second step in the final reaction sequence of ubiquinone-8 (UQ-8) biosynthesis, which is the condensation of the polyisoprenoid side chain with PHB, generating the first membrane-bound Q intermediate 3-octaprenyl-4-hydroxybenzoate. The protein is 4-hydroxybenzoate octaprenyltransferase of Yersinia pseudotuberculosis serotype IB (strain PB1/+).